The sequence spans 355 residues: Uroporphyrinogen decarboxylase (355 aa).

Substrate-binding positions include 27 to 31, aspartate 77, tyrosine 154, threonine 209, and histidine 328; that span reads RQAGR.

It belongs to the uroporphyrinogen decarboxylase family. Homodimer.

It localises to the cytoplasm. It catalyses the reaction uroporphyrinogen III + 4 H(+) = coproporphyrinogen III + 4 CO2. The protein operates within porphyrin-containing compound metabolism; protoporphyrin-IX biosynthesis; coproporphyrinogen-III from 5-aminolevulinate: step 4/4. In terms of biological role, catalyzes the decarboxylation of four acetate groups of uroporphyrinogen-III to yield coproporphyrinogen-III. This is Uroporphyrinogen decarboxylase from Aliivibrio salmonicida (strain LFI1238) (Vibrio salmonicida (strain LFI1238)).